The following is a 328-amino-acid chain: Ferredoxin--NADP reductase (328 aa).

FAD contacts are provided by serine 14, glutamate 33, glutamine 41, tyrosine 46, isoleucine 90, and phenylalanine 126.

It belongs to the ferredoxin--NADP reductase type 2 family. In terms of assembly, homodimer. It depends on FAD as a cofactor.

The catalysed reaction is 2 reduced [2Fe-2S]-[ferredoxin] + NADP(+) + H(+) = 2 oxidized [2Fe-2S]-[ferredoxin] + NADPH. In Mycoplasmoides gallisepticum (strain R(low / passage 15 / clone 2)) (Mycoplasma gallisepticum), this protein is Ferredoxin--NADP reductase.